The chain runs to 303 residues: Probable cell division protein WhiA (303 aa).

Residues 272-303 (SIQQVADALEFPITKSGVNHRLRKINKIADDL) constitute a DNA-binding region (H-T-H motif).

This sequence belongs to the WhiA family.

In terms of biological role, involved in cell division and chromosome segregation. The sequence is that of Probable cell division protein WhiA from Streptococcus pyogenes serotype M3 (strain ATCC BAA-595 / MGAS315).